The primary structure comprises 153 residues: Ribosome maturation factor RimP (153 aa).

The protein belongs to the RimP family.

It is found in the cytoplasm. Required for maturation of 30S ribosomal subunits. This Pelotomaculum thermopropionicum (strain DSM 13744 / JCM 10971 / SI) protein is Ribosome maturation factor RimP.